Here is a 189-residue protein sequence, read N- to C-terminus: Cell division protein SepF (189 aa).

The tract at residues 25–70 (ESRVQQQAVKPSNSRPAQQEPVRDIKQPRLVSSSSQHVTNTPSSNE) is disordered. 2 stretches are compositionally biased toward polar residues: residues 27-41 (RVQQ…SRPA) and 54-70 (LVSS…SSNE).

Belongs to the SepF family. In terms of assembly, homodimer. Interacts with FtsZ.

Its subcellular location is the cytoplasm. Functionally, cell division protein that is part of the divisome complex and is recruited early to the Z-ring. Probably stimulates Z-ring formation, perhaps through the cross-linking of FtsZ protofilaments. Its function overlaps with FtsA. The polypeptide is Cell division protein SepF (Streptococcus gordonii (strain Challis / ATCC 35105 / BCRC 15272 / CH1 / DL1 / V288)).